The following is a 1323-amino-acid chain: Phosphoribosylformylglycinamidine synthase (1323 aa).

ATP contacts are provided by residues G312–D323, N391–Y393, and A691. Residues D692, E733, N737, and D903 each coordinate Mg(2+). S905 is a binding site for ATP. The Glutamine amidotransferase type-1 domain occupies V1062–G1306. C1156 functions as the Nucleophile in the catalytic mechanism. Catalysis depends on residues H1284 and E1286.

It in the N-terminal section; belongs to the FGAMS family.

The protein resides in the cytoplasm. It catalyses the reaction N(2)-formyl-N(1)-(5-phospho-beta-D-ribosyl)glycinamide + L-glutamine + ATP + H2O = 2-formamido-N(1)-(5-O-phospho-beta-D-ribosyl)acetamidine + L-glutamate + ADP + phosphate + H(+). It functions in the pathway purine metabolism; IMP biosynthesis via de novo pathway; 5-amino-1-(5-phospho-D-ribosyl)imidazole from N(2)-formyl-N(1)-(5-phospho-D-ribosyl)glycinamide: step 1/2. In terms of biological role, phosphoribosylformylglycinamidine synthase involved in the purines biosynthetic pathway. Catalyzes the ATP-dependent conversion of formylglycinamide ribonucleotide (FGAR) and glutamine to yield formylglycinamidine ribonucleotide (FGAM) and glutamate. The polypeptide is Phosphoribosylformylglycinamidine synthase (ade3) (Schizosaccharomyces pombe (strain 972 / ATCC 24843) (Fission yeast)).